A 54-amino-acid chain; its full sequence is Large ribosomal subunit protein bL33 (54 aa).

This sequence belongs to the bacterial ribosomal protein bL33 family.

This is Large ribosomal subunit protein bL33 from Symbiobacterium thermophilum (strain DSM 24528 / JCM 14929 / IAM 14863 / T).